A 132-amino-acid chain; its full sequence is Ribonuclease P protein component (132 aa).

It belongs to the RnpA family. Consists of a catalytic RNA component (M1 or rnpB) and a protein subunit.

The enzyme catalyses Endonucleolytic cleavage of RNA, removing 5'-extranucleotides from tRNA precursor.. RNaseP catalyzes the removal of the 5'-leader sequence from pre-tRNA to produce the mature 5'-terminus. It can also cleave other RNA substrates such as 4.5S RNA. The protein component plays an auxiliary but essential role in vivo by binding to the 5'-leader sequence and broadening the substrate specificity of the ribozyme. The chain is Ribonuclease P protein component from Micrococcus luteus (strain ATCC 4698 / DSM 20030 / JCM 1464 / CCM 169 / CCUG 5858 / IAM 1056 / NBRC 3333 / NCIMB 9278 / NCTC 2665 / VKM Ac-2230) (Micrococcus lysodeikticus).